Here is a 968-residue protein sequence, read N- to C-terminus: Probable transport protein MmpL2 (968 aa).

The next 11 membrane-spanning stretches (helical) occupy residues 22-42 (FAVV…LAVP), 204-224 (VIAA…LVLI), 245-265 (IFSL…AAST), 297-317 (AHVI…LSFA), 328-348 (PIAI…PAVL), 378-398 (WPGP…LALP), 763-783 (YDLL…MMII), 787-807 (VVAA…SFGL), 815-835 (ILGI…LLAV), 866-886 (TGGV…LFVF), and 890-910 (RIIG…TLVV).

It belongs to the resistance-nodulation-cell division (RND) (TC 2.A.6) family. MmpL subfamily.

Its subcellular location is the cell membrane. This is Probable transport protein MmpL2 (mmpL2) from Mycobacterium tuberculosis (strain CDC 1551 / Oshkosh).